Consider the following 131-residue polypeptide: Profilin-4 (131 aa).

A disulfide bridge links C13 with C115. An Involved in PIP2 interaction motif is present at residues 81-97 (VVIRGKKGTGGITIKKT). Residue T111 is modified to Phosphothreonine.

This sequence belongs to the profilin family. In terms of assembly, occurs in many kinds of cells as a complex with monomeric actin in a 1:1 ratio. Post-translationally, phosphorylated by MAP kinases. As to expression, expressed predominantly in endosperm but is also found at low levels in all tissues examined, including mature and germinated pollen.

Its subcellular location is the cytoplasm. The protein localises to the cytoskeleton. Functionally, binds to actin and affects the structure of the cytoskeleton. At high concentrations, profilin prevents the polymerization of actin, whereas it enhances it at low concentrations. By binding to PIP2, it inhibits the formation of IP3 and DG. Has a high affinity for poly-proline. The chain is Profilin-4 (PRO4) from Zea mays (Maize).